We begin with the raw amino-acid sequence, 447 residues long: Argininosuccinate lyase (447 aa).

The protein belongs to the lyase 1 family. Argininosuccinate lyase subfamily.

It is found in the cytoplasm. The enzyme catalyses 2-(N(omega)-L-arginino)succinate = fumarate + L-arginine. It participates in amino-acid biosynthesis; L-arginine biosynthesis; L-arginine from L-ornithine and carbamoyl phosphate: step 3/3. This chain is Argininosuccinate lyase, found in Sulfolobus acidocaldarius (strain ATCC 33909 / DSM 639 / JCM 8929 / NBRC 15157 / NCIMB 11770).